The following is a 118-amino-acid chain: Large ribosomal subunit protein bL17 (118 aa).

This sequence belongs to the bacterial ribosomal protein bL17 family. Part of the 50S ribosomal subunit. Contacts protein L32.

In Aster yellows witches'-broom phytoplasma (strain AYWB), this protein is Large ribosomal subunit protein bL17.